A 74-amino-acid chain; its full sequence is Translation initiation factor IF-1 (74 aa).

Positions 1 to 72 (MSKEDAIEME…NKGRITYRLK (72 aa)) constitute an S1-like domain.

Belongs to the IF-1 family. Component of the 30S ribosomal translation pre-initiation complex which assembles on the 30S ribosome in the order IF-2 and IF-3, IF-1 and N-formylmethionyl-tRNA(fMet); mRNA recruitment can occur at any time during PIC assembly.

The protein localises to the cytoplasm. Its function is as follows. One of the essential components for the initiation of protein synthesis. Stabilizes the binding of IF-2 and IF-3 on the 30S subunit to which N-formylmethionyl-tRNA(fMet) subsequently binds. Helps modulate mRNA selection, yielding the 30S pre-initiation complex (PIC). Upon addition of the 50S ribosomal subunit IF-1, IF-2 and IF-3 are released leaving the mature 70S translation initiation complex. The chain is Translation initiation factor IF-1 from Synechococcus sp. (strain JA-2-3B'a(2-13)) (Cyanobacteria bacterium Yellowstone B-Prime).